The sequence spans 433 residues: Pyrimidine-nucleoside phosphorylase (433 aa).

81–83 (KHS) contributes to the phosphate binding site. Residues Gly88 and Thr90 each coordinate K(+). Phosphate-binding positions include Thr92, 108 to 110 (KMS), and Thr120. Arg168 and Lys187 together coordinate substrate. 3 residues coordinate K(+): Leu243, Ala246, and Glu255.

It belongs to the thymidine/pyrimidine-nucleoside phosphorylase family. Homodimer. It depends on K(+) as a cofactor.

The catalysed reaction is uridine + phosphate = alpha-D-ribose 1-phosphate + uracil. It catalyses the reaction thymidine + phosphate = 2-deoxy-alpha-D-ribose 1-phosphate + thymine. It carries out the reaction 2'-deoxyuridine + phosphate = 2-deoxy-alpha-D-ribose 1-phosphate + uracil. Functionally, catalyzes phosphorolysis of the pyrimidine nucleosides uridine, thymidine and 2'-deoxyuridine with the formation of the corresponding pyrimidine base and ribose-1-phosphate. This Staphylococcus aureus (strain Mu50 / ATCC 700699) protein is Pyrimidine-nucleoside phosphorylase (pdp).